Reading from the N-terminus, the 288-residue chain is Bifunctional protein FolD (288 aa).

NADP(+)-binding positions include 166 to 168 (GRS), Ser-191, and Ile-232.

The protein belongs to the tetrahydrofolate dehydrogenase/cyclohydrolase family. As to quaternary structure, homodimer.

The enzyme catalyses (6R)-5,10-methylene-5,6,7,8-tetrahydrofolate + NADP(+) = (6R)-5,10-methenyltetrahydrofolate + NADPH. It carries out the reaction (6R)-5,10-methenyltetrahydrofolate + H2O = (6R)-10-formyltetrahydrofolate + H(+). It functions in the pathway one-carbon metabolism; tetrahydrofolate interconversion. Catalyzes the oxidation of 5,10-methylenetetrahydrofolate to 5,10-methenyltetrahydrofolate and then the hydrolysis of 5,10-methenyltetrahydrofolate to 10-formyltetrahydrofolate. The chain is Bifunctional protein FolD from Rickettsia africae (strain ESF-5).